Reading from the N-terminus, the 398-residue chain is Glutamyl-tRNA reductase (398 aa).

Substrate contacts are provided by residues 45-48, Ser-88, 93-95, and Gln-99; these read TCNR and EDQ. Cys-46 serves as the catalytic Nucleophile. An NADP(+)-binding site is contributed by 168-173; sequence GAGKMG.

This sequence belongs to the glutamyl-tRNA reductase family. Homodimer.

It catalyses the reaction (S)-4-amino-5-oxopentanoate + tRNA(Glu) + NADP(+) = L-glutamyl-tRNA(Glu) + NADPH + H(+). It participates in porphyrin-containing compound metabolism; protoporphyrin-IX biosynthesis; 5-aminolevulinate from L-glutamyl-tRNA(Glu): step 1/2. Its function is as follows. Catalyzes the NADPH-dependent reduction of glutamyl-tRNA(Glu) to glutamate 1-semialdehyde (GSA). This Methanothermobacter marburgensis (strain ATCC BAA-927 / DSM 2133 / JCM 14651 / NBRC 100331 / OCM 82 / Marburg) (Methanobacterium thermoautotrophicum) protein is Glutamyl-tRNA reductase (hemA).